Here is a 484-residue protein sequence, read N- to C-terminus: Glutathione reductase (484 aa).

FAD contacts are provided by S32 and G33. S32 contributes to the glutathione binding site. R39 is a binding site for glutathione. FAD-binding residues include E52, T59, C60, and K68. Residues C60 and C65 are joined by a disulfide bond. Y122 lines the glutathione pocket. Position 138 (A138) interacts with FAD. 5 residues coordinate NADP(+): A204, I207, E210, R227, and R233. Residue T242 coordinates glutathione. Position 293 (G293) interacts with NADP(+). Position 333 (D333) interacts with FAD. E339 serves as a coordination point for NADP(+). Residue T341 coordinates FAD. Position 349 (R349) interacts with glutathione. NADP(+) is bound at residue V374. K426 contacts glutathione. H473 is a binding site for FAD. The active-site Proton acceptor is H473.

This sequence belongs to the class-I pyridine nucleotide-disulfide oxidoreductase family. Homodimer. The cofactor is FAD.

The protein resides in the cytoplasm. The protein localises to the mitochondrion. It carries out the reaction 2 glutathione + NADP(+) = glutathione disulfide + NADPH + H(+). In terms of biological role, catalyzes the reduction of glutathione disulfide (GSSG) to reduced glutathione (GSH). Constitutes the major mechanism to maintain a high GSH:GSSG ratio in the cytosol. The polypeptide is Glutathione reductase (GLR1) (Kluyveromyces lactis (strain ATCC 8585 / CBS 2359 / DSM 70799 / NBRC 1267 / NRRL Y-1140 / WM37) (Yeast)).